The primary structure comprises 188 residues: GTPase KRas (188 aa).

GTP-binding positions include 10–18 (GAGGVGKSA), 29–35 (VDEYDPT), 59–60 (AG), and 116–119 (NKCD). Positions 32–40 (YDPTIEDSY) match the Effector region motif. Positions 167 to 188 (KEKMSKEGKKKKKKSKTKCVLM) are disordered. Residue Cys-185 is modified to Cysteine methyl ester. Cys-185 carries S-farnesyl cysteine lipidation. The propeptide at 186–188 (VLM) is removed in mature form.

Belongs to the small GTPase superfamily. Ras family.

The protein localises to the cell membrane. Its subcellular location is the cytoplasm. The enzyme catalyses GTP + H2O = GDP + phosphate + H(+). Alternates between an inactive form bound to GDP and an active form bound to GTP. Activated by a guanine nucleotide-exchange factor (GEF) and inactivated by a GTPase-activating protein (GAP). Its function is as follows. Ras proteins bind GDP/GTP and possess intrinsic GTPase activity. Plays an important role in the regulation of cell proliferation. May play a role in promoting oncogenic events by inducing transcriptional silencing of tumor suppressor genes (TSGs). The polypeptide is GTPase KRas (kras) (Cyprinus carpio (Common carp)).